We begin with the raw amino-acid sequence, 373 residues long: Dual-specificity RNA methyltransferase RlmN (373 aa).

Glu94 serves as the catalytic Proton acceptor. The 240-residue stretch at 100–339 (EEDRATLCVS…VIVRKTRGDD (240 aa)) folds into the Radical SAM core domain. Cysteines 107 and 344 form a disulfide. Residues Cys114, Cys118, and Cys121 each coordinate [4Fe-4S] cluster. S-adenosyl-L-methionine contacts are provided by residues 168–169 (GE), Ser200, 222–224 (SIH), and Asn301. Cys344 acts as the S-methylcysteine intermediate in catalysis.

This sequence belongs to the radical SAM superfamily. RlmN family. [4Fe-4S] cluster is required as a cofactor.

The protein localises to the cytoplasm. It catalyses the reaction adenosine(2503) in 23S rRNA + 2 reduced [2Fe-2S]-[ferredoxin] + 2 S-adenosyl-L-methionine = 2-methyladenosine(2503) in 23S rRNA + 5'-deoxyadenosine + L-methionine + 2 oxidized [2Fe-2S]-[ferredoxin] + S-adenosyl-L-homocysteine. The enzyme catalyses adenosine(37) in tRNA + 2 reduced [2Fe-2S]-[ferredoxin] + 2 S-adenosyl-L-methionine = 2-methyladenosine(37) in tRNA + 5'-deoxyadenosine + L-methionine + 2 oxidized [2Fe-2S]-[ferredoxin] + S-adenosyl-L-homocysteine. Functionally, specifically methylates position 2 of adenine 2503 in 23S rRNA and position 2 of adenine 37 in tRNAs. m2A2503 modification seems to play a crucial role in the proofreading step occurring at the peptidyl transferase center and thus would serve to optimize ribosomal fidelity. The protein is Dual-specificity RNA methyltransferase RlmN of Shewanella frigidimarina (strain NCIMB 400).